The chain runs to 689 residues: 7SK snRNA methylphosphate capping enzyme (689 aa).

Position 1 is an N-acetylmethionine (methionine 1). Basic and acidic residues predominate over residues 1–10; that stretch reads MIEMAAEKEP. The interval 1–167 is disordered; it reads MIEMAAEKEP…GGGGFKHPAF (167 aa). A compositionally biased stretch (low complexity) spans 52-84; sequence GRCAPSAGSPAAAVGRESPGAAATSSSGPQAQQ. Phosphoserine is present on residues serine 57, serine 60, serine 69, and serine 101. Arginine 117 is modified (omega-N-methylarginine). A phosphoserine mark is found at serine 152, serine 175, and serine 179. Threonine 213 bears the Phosphothreonine mark. 3 positions are modified to phosphoserine: serine 216, serine 217, and serine 254. Positions 258 to 269 are enriched in basic residues; the sequence is TGRKRHRHRGQH. Residues 258–314 are disordered; it reads TGRKRHRHRGQHHQQQQAAGGSESHPVPPTAPLTPLLHGEGASQQPRHRGQNRDAPQ. Residue threonine 291 is modified to Phosphothreonine. Residues serine 330 and serine 344 each carry the phosphoserine modification. Residues 332–407 are disordered; that stretch reads LPSALQGPSG…HHPLPAAGFK (76 aa). The span at 338-359 shows a compositional bias: low complexity; sequence GPSGSLSAPPAASVISAPPSSS. The span at 360 to 369 shows a compositional bias: basic residues; sequence SRHRKRRRTS. Serine 390 is modified (phosphoserine). S-adenosyl-L-methionine-binding positions include tyrosine 422, arginine 433, 451-453, 474-475, 559-560, and leucine 581; these read GCN, DI, and NY. Residues 431–686 enclose the Bin3-type SAM domain; sequence DGRLRVLKPE…PVYLFHKARS (256 aa). Lysine 643 participates in a covalent cross-link: Glycyl lysine isopeptide (Lys-Gly) (interchain with G-Cter in SUMO2).

Belongs to the methyltransferase superfamily. Core component of the 7SK RNP complex, at least composed of 7SK RNA, LARP7, MEPCE, HEXIM1 (or HEXIM2) and P-TEFb (composed of CDK9 and CCNT1/cyclin-T1). Interacts with METTL16. Interacts with RBM7; upon genotoxic stress this interaction is enhanced, triggering the release of inactive P-TEFb complex from the core, yielding to P-TEFb complex activation. In terms of processing, dephosphorylated at Ser-152 by the PNUTS-PP1 complex, promoting RNA polymerase II transcription pause-release. Expressed in chronic myeloid leukemia cells, adrenal gland, brain, cerebellum, kidney, lung, mammary gland and testis. Weakly or not expressed in other tissues.

Its subcellular location is the nucleus. It catalyses the reaction a 5'-end triphospho-guanosine-ribonucleotide-snRNA + S-adenosyl-L-methionine = a 5'-end methyltriphosphate-guanosine-ribonucleotide-snRNA + S-adenosyl-L-homocysteine. Functionally, S-adenosyl-L-methionine-dependent methyltransferase that adds a methylphosphate cap at the 5'-end of 7SK snRNA (7SK RNA), leading to stabilize it. Also has a non-enzymatic function as part of the 7SK RNP complex: the 7SK RNP complex sequesters the positive transcription elongation factor b (P-TEFb) in a large inactive 7SK RNP complex preventing RNA polymerase II phosphorylation and subsequent transcriptional elongation. The 7SK RNP complex also promotes snRNA gene transcription by RNA polymerase II via interaction with the little elongation complex (LEC). In the 7SK RNP complex, MEPCE is required to stabilize 7SK RNA and facilitate the assembly of 7SK RNP complex. MEPCE has a non-enzymatic function in the 7SK RNP complex; interaction with LARP7 within the 7SK RNP complex occluding its catalytic center. Also required for stability of U6 snRNAs. The chain is 7SK snRNA methylphosphate capping enzyme from Homo sapiens (Human).